The following is a 1275-amino-acid chain: Inner capsid protein lambda-1 (1275 aa).

Residues 1 to 12 (MKRIPRKTRGKS) show a composition bias toward basic residues. The disordered stretch occupies residues 1-147 (MKRIPRKTRG…NVDNEGGDNQ (147 aa)). The span at 18 to 35 (DSTERADDGSAQLRDKQS) shows a compositional bias: basic and acidic residues. The span at 55–66 (TRPSLQTVQKAT) shows a compositional bias: polar residues. 2 stretches are compositionally biased toward basic and acidic residues: residues 80–98 (AVDK…HVEA) and 105–117 (ATKR…DKQK). Over residues 118 to 139 (AQVTYNDTGINNANELSRSGNV) the composition is skewed to polar residues. The C2H2-type zinc finger occupies 181-203 (YQCHVCSAVLFSPLDLDAHVASH).

Belongs to the turreted BTV-fold inner capsid family. In terms of assembly, homodecamer; each decamer is made up of two conformers of VP2, called VP2A and VP2B. 12 homodecamers assemble to form an icosahedral capsid. Interacts with protein mu-NS; in viral inclusions. It depends on Mg(2+) as a cofactor. Requires Mn(2+) as cofactor.

The protein resides in the virion. The enzyme catalyses ATP + H2O = ADP + phosphate + H(+). Functionally, inner capsid protein that self-assembles to form an icosahedral capsid with a T=2 symmetry, which consists of 120 copies of VP2, with channels at each of its five-fold vertices. This capsid constitutes the innermost concentric layer of the viral mature particle. Displays NTPase, RNA 5'-triphosphatase (RTPase) and RNA helicase activities and probably participates in transcription of the viral genome. Helicase activity might be involved in unwinding or reannealing dsRNA during RNA synthesis. RTPase enzymatic activity represents the first step in RNA capping, which yields a 5'-diphosphorylated plus-strand RNA. In Reovirus type 2 (strain D5/Jones) (T2J), this protein is Inner capsid protein lambda-1.